A 286-amino-acid polypeptide reads, in one-letter code: MPFFAVAFPVFDPVAVAIGPFAIRWYALAYIAGIVIGWLYARMLLQRQRLWGGPSPISLEAFDDFILWVTIGIILGGRTGYVLFYNLDFFIRHPAEIFELWKGGMSFHGGFMGCVAAVVLFGWKRKVPILSLGDITCAVGPIGLFLGRIANFINGELWGRPADASVPWAMVFPNAGPLPRHPSQLYEAGLEGIGLFVILALMIRAGALKRPGLIIGAFLTFYGLARITGEFFREPDPQLGFLWGDMTMGMLLSIPMVIVGILVMITTWRRGRGAPAAATPSSEAAS.

Transmembrane regions (helical) follow at residues 25–45 (WYAL…RMLL), 65–85 (FILW…VLFY), 103–123 (GGMS…LFGW), and 127–147 (VPIL…LFLG). An a 1,2-diacyl-sn-glycero-3-phospho-(1'-sn-glycerol)-binding site is contributed by R148. 3 consecutive transmembrane segments (helical) span residues 188–208 (AGLE…AGAL), 212–232 (GLII…GEFF), and 248–268 (MGML…ITTW).

Belongs to the Lgt family.

It is found in the cell inner membrane. It carries out the reaction L-cysteinyl-[prolipoprotein] + a 1,2-diacyl-sn-glycero-3-phospho-(1'-sn-glycerol) = an S-1,2-diacyl-sn-glyceryl-L-cysteinyl-[prolipoprotein] + sn-glycerol 1-phosphate + H(+). It participates in protein modification; lipoprotein biosynthesis (diacylglyceryl transfer). In terms of biological role, catalyzes the transfer of the diacylglyceryl group from phosphatidylglycerol to the sulfhydryl group of the N-terminal cysteine of a prolipoprotein, the first step in the formation of mature lipoproteins. The protein is Phosphatidylglycerol--prolipoprotein diacylglyceryl transferase of Rhodopseudomonas palustris (strain ATCC BAA-98 / CGA009).